The primary structure comprises 95 residues: Aspartyl/glutamyl-tRNA(Asn/Gln) amidotransferase subunit C (95 aa).

This sequence belongs to the GatC family. As to quaternary structure, heterotrimer of A, B and C subunits.

The enzyme catalyses L-glutamyl-tRNA(Gln) + L-glutamine + ATP + H2O = L-glutaminyl-tRNA(Gln) + L-glutamate + ADP + phosphate + H(+). It carries out the reaction L-aspartyl-tRNA(Asn) + L-glutamine + ATP + H2O = L-asparaginyl-tRNA(Asn) + L-glutamate + ADP + phosphate + 2 H(+). Functionally, allows the formation of correctly charged Asn-tRNA(Asn) or Gln-tRNA(Gln) through the transamidation of misacylated Asp-tRNA(Asn) or Glu-tRNA(Gln) in organisms which lack either or both of asparaginyl-tRNA or glutaminyl-tRNA synthetases. The reaction takes place in the presence of glutamine and ATP through an activated phospho-Asp-tRNA(Asn) or phospho-Glu-tRNA(Gln). The polypeptide is Aspartyl/glutamyl-tRNA(Asn/Gln) amidotransferase subunit C (Methylorubrum extorquens (strain CM4 / NCIMB 13688) (Methylobacterium extorquens)).